Consider the following 324-residue polypeptide: Glucosyl-3-phosphoglycerate synthase (324 aa).

UDP-alpha-D-glucose-binding positions include 50 to 54 (PALNE), Ser81, Lys114, and 134 to 135 (DS). Asp136 provides a ligand contact to Mn(2+). 184-187 (GRVT) contributes to the (2R)-3-phosphoglycerate binding site. Residues 229–232 (YGVE) and 256–261 (RAHRNR) contribute to the UDP-alpha-D-glucose site. A Mn(2+)-binding site is contributed by His258. A (2R)-3-phosphoglycerate-binding site is contributed by Asn260.

This sequence belongs to the glycosyltransferase 2 family. As to quaternary structure, homotrimer. The cofactor is Mg(2+). Mn(2+) serves as cofactor.

It catalyses the reaction an NDP-alpha-D-glucose + (2R)-3-phosphoglycerate = (2R)-2-O-(alpha-D-glucopyranosyl)-3-phospho-glycerate + a ribonucleoside 5'-diphosphate + H(+). It carries out the reaction (2R)-3-phosphoglycerate + UDP-alpha-D-glucose = (2R)-2-O-(alpha-D-glucopyranosyl)-3-phospho-glycerate + UDP + H(+). The catalysed reaction is ADP-alpha-D-glucose + (2R)-3-phosphoglycerate = (2R)-2-O-(alpha-D-glucopyranosyl)-3-phospho-glycerate + ADP + H(+). The enzyme catalyses GDP-D-glucose + (2R)-3-phosphoglycerate = (2R)-2-O-(alpha-D-glucopyranosyl)-3-phospho-glycerate + GDP + H(+). In terms of biological role, involved in the biosynthesis of 6-O-methylglucose lipopolysaccarides (MGLPs). Catalyzes the transfer of the glucose moiety from a nuleotide sugar such as UDP-alpha-D-glucose to the position 2 of 3-phospho-D-glycerate (3-PGA) to form glucosyl-3-phosphoglycerate (GPG). It can use UDP-glucose, ADP-glucose and GDP-glucose as sugar donor substrates with decreasing affinity and with 3-PGA as an acceptor. D-glycerate can only be an acceptor with ADP-glucose and at a very low rate. This Mycobacterium bovis (strain ATCC BAA-935 / AF2122/97) protein is Glucosyl-3-phosphoglycerate synthase (gpgS).